The chain runs to 430 residues: Trigger factor (430 aa).

The 86-residue stretch at 157–242 (GDLVALETWS…AVEVSEPVLP (86 aa)) folds into the PPIase FKBP-type domain.

The protein belongs to the FKBP-type PPIase family. Tig subfamily.

The protein resides in the cytoplasm. It carries out the reaction [protein]-peptidylproline (omega=180) = [protein]-peptidylproline (omega=0). Functionally, involved in protein export. Acts as a chaperone by maintaining the newly synthesized protein in an open conformation. Functions as a peptidyl-prolyl cis-trans isomerase. The polypeptide is Trigger factor (Xanthomonas campestris pv. campestris (strain ATCC 33913 / DSM 3586 / NCPPB 528 / LMG 568 / P 25)).